The primary structure comprises 284 residues: Acetylglutamate kinase (284 aa).

Substrate is bound by residues 54 to 55 (GG), arginine 76, and asparagine 179.

This sequence belongs to the acetylglutamate kinase family. ArgB subfamily.

The protein localises to the cytoplasm. It catalyses the reaction N-acetyl-L-glutamate + ATP = N-acetyl-L-glutamyl 5-phosphate + ADP. It functions in the pathway amino-acid biosynthesis; L-arginine biosynthesis; N(2)-acetyl-L-ornithine from L-glutamate: step 2/4. Catalyzes the ATP-dependent phosphorylation of N-acetyl-L-glutamate. This is Acetylglutamate kinase from Sorangium cellulosum (strain So ce56) (Polyangium cellulosum (strain So ce56)).